Here is a 331-residue protein sequence, read N- to C-terminus: Fructose-1,6-bisphosphatase class 1 2 (331 aa).

Residues E91, D112, L114, and D115 each coordinate Mg(2+). Substrate is bound by residues 115–118 (DGSS), N207, Y238, and K268. E274 serves as a coordination point for Mg(2+).

Belongs to the FBPase class 1 family. Homotetramer. The cofactor is Mg(2+).

Its subcellular location is the cytoplasm. The catalysed reaction is beta-D-fructose 1,6-bisphosphate + H2O = beta-D-fructose 6-phosphate + phosphate. Its pathway is carbohydrate biosynthesis; Calvin cycle. This is Fructose-1,6-bisphosphatase class 1 2 from Acaryochloris marina (strain MBIC 11017).